A 942-amino-acid chain; its full sequence is tRNAse Z TRZ4, mitochondrial (942 aa).

The N-terminal 50 residues, 1 to 50, are a transit peptide targeting the mitochondrion; it reads MLTSSMPQNLSLFGFSPLKSSSFALILRPFSLYPPIFASSSPAPSRRPPR. The segment at 38-85 is disordered; it reads ASSSPAPSRRPPRTAGYRRSGPSPPRRKWSSFEEQKRKGRSPMEKDKA. Residues 67–85 show a composition bias toward basic and acidic residues; the sequence is SSFEEQKRKGRSPMEKDKA.

It belongs to the RNase Z family. Homodimer. Requires Zn(2+) as cofactor. It depends on Ca(2+) as a cofactor. Mn(2+) is required as a cofactor. The cofactor is Mg(2+).

The protein resides in the mitochondrion. It catalyses the reaction Endonucleolytic cleavage of RNA, removing extra 3' nucleotides from tRNA precursor, generating 3' termini of tRNAs. A 3'-hydroxy group is left at the tRNA terminus and a 5'-phosphoryl group is left at the trailer molecule.. In terms of biological role, zinc phosphodiesterase, which displays tRNA 3'-processing endonuclease activity. Involved in tRNA maturation, by removing a 3'-trailer from precursor tRNA. Can process the mitochondrial tRNA-like structures (t-elements). The polypeptide is tRNAse Z TRZ4, mitochondrial (Arabidopsis thaliana (Mouse-ear cress)).